Consider the following 332-residue polypeptide: Glycerol-3-phosphate dehydrogenase [NAD(P)+] (332 aa).

Positions 11, 12, 32, and 106 each coordinate NADPH. K106, G137, and S139 together coordinate sn-glycerol 3-phosphate. A141 contributes to the NADPH binding site. 5 residues coordinate sn-glycerol 3-phosphate: K192, D245, S255, R256, and N257. Catalysis depends on K192, which acts as the Proton acceptor. R256 is a binding site for NADPH. V280 and E282 together coordinate NADPH.

The protein belongs to the NAD-dependent glycerol-3-phosphate dehydrogenase family.

The protein resides in the cytoplasm. The catalysed reaction is sn-glycerol 3-phosphate + NAD(+) = dihydroxyacetone phosphate + NADH + H(+). It catalyses the reaction sn-glycerol 3-phosphate + NADP(+) = dihydroxyacetone phosphate + NADPH + H(+). Its pathway is membrane lipid metabolism; glycerophospholipid metabolism. Catalyzes the reduction of the glycolytic intermediate dihydroxyacetone phosphate (DHAP) to sn-glycerol 3-phosphate (G3P), the key precursor for phospholipid synthesis. In Staphylococcus haemolyticus (strain JCSC1435), this protein is Glycerol-3-phosphate dehydrogenase [NAD(P)+].